Consider the following 999-residue polypeptide: Sarcoplasmic/endoplasmic reticulum calcium ATPase 3 (999 aa).

The residue at position 1 (M1) is an N-acetylmethionine. At 1–48 the chain is on the cytoplasmic side; the sequence is MEEAHLLSAADVLRRFSVTAEGGLTLEQVTDARERYGPNELPTEEGKS. At S17 the chain carries Phosphoserine. T19 carries the post-translational modification Phosphothreonine. The chain crosses the membrane as a helical span at residues 49–69; that stretch reads LWELVVEQFEDLLVRILLLAA. At 70–89 the chain is on the lumenal side; sequence LVSFVLAWFEEGEETTTAFV. The helical transmembrane segment at 90 to 110 threads the bilayer; the sequence is EPLVIMLILVANAIVGVWQER. Residues 111-253 are Cytoplasmic-facing; that stretch reads NAESAIEALK…PERTPLQRKL (143 aa). Residues 254 to 273 traverse the membrane as a helical segment; it reads DEFGRQLSHAISVICVAVWV. Over 274–295 the chain is Lumenal; sequence INIGHFADPAHGGSWLRGAVYY. The chain crosses the membrane as a helical span at residues 296 to 313; it reads FKIAVALAVAAIPEGLPA. The Ca(2+) site is built by V304, A305, I307, and E309. At 314 to 757 the chain is on the cytoplasmic side; that stretch reads VITTCLALGT…EEGRAIYNNM (444 aa). Residue D351 is the 4-aspartylphosphate intermediate of the active site. D351 and T353 together coordinate Mg(2+). Residue T353 coordinates ATP. Residues 370-400 are interaction with phospholamban 1; sequence AEAEAGACRLHEFTISGTTYTPEGEVRQGEQ. T415 is modified (phosphothreonine). Positions 442, 489, 515, 560, 625, 626, and 627 each coordinate ATP. At S662 the chain carries Phosphoserine. ATP-binding residues include R678 and K684. D703 provides a ligand contact to Mg(2+). An ATP-binding site is contributed by N706. Residues 758–777 form a helical membrane-spanning segment; the sequence is KQFIRYLISSNVGEVVCIFL. Ca(2+)-binding residues include N768 and E771. Residues 778–787 lie on the Lumenal side of the membrane; sequence TAILGLPEAL. The chain crosses the membrane as a helical span at residues 788-808; sequence IPVQLLWVNLVTDGLPATALG. Residues 788 to 808 form an interaction with phospholamban 2 region; it reads IPVQLLWVNLVTDGLPATALG. Positions 796, 799, and 800 each coordinate Ca(2+). Residues 809–828 lie on the Cytoplasmic side of the membrane; it reads FNPPDLDIMEKLPRNPREAL. Residues 829 to 851 traverse the membrane as a helical segment; it reads ISGWLFFRYLAIGVYVGLATVAA. Topologically, residues 852–897 are lumenal; sequence ATWWFLYDAEGPQVTFHQLRNFLKCSEDNPLFAGIDCEVFESRFPT. The helical transmembrane segment at 898–917 threads the bilayer; the sequence is TMALSVLVTIEMCNALNSVS. E908 provides a ligand contact to Ca(2+). Topologically, residues 918–930 are cytoplasmic; the sequence is ENQSLLRMPPWLN. The helical transmembrane segment at 931-949 threads the bilayer; sequence PWLLGAVVMSMALHFLILL. The Lumenal portion of the chain corresponds to 950–964; sequence VPPLPLIFQVTPLSG. The helical transmembrane segment at 965–985 threads the bilayer; sequence RQWGVVLQMSLPVILLDEALK. Residues 986–999 are Cytoplasmic-facing; the sequence is YLSRHHVDEKKDLK.

The protein belongs to the cation transport ATPase (P-type) (TC 3.A.3) family. Type IIA subfamily. In terms of assembly, interacts with sarcolipin (SLN). Interacts with phospholamban (PLN). Interacts with myoregulin (MRLN). Interacts with DWORF. Interacts with VMP1. Interacts with TUNAR; the interaction occurs at low levels in low glucose conditions and is increased by high glucose levels. Mg(2+) is required as a cofactor. In terms of tissue distribution, found in most tissues. Most abundant in large and small intestine, spleen and lung. Also detected in PC12 cells.

The protein resides in the endoplasmic reticulum membrane. It localises to the sarcoplasmic reticulum membrane. It catalyses the reaction Ca(2+)(in) + ATP + H2O = Ca(2+)(out) + ADP + phosphate + H(+). Inhibited by sarcolipin (SLN), phospholamban (PLN) and myoregulin (MRLN). Enhanced by DWORF; DWORF increases activity by displacing sarcolipin (SLN), phospholamban (PLN) and myoregulin (MRLN). This magnesium-dependent enzyme catalyzes the hydrolysis of ATP coupled with the transport of the calcium. Transports calcium ions from the cytosol into the sarcoplasmic/endoplasmic reticulum lumen. Contributes to calcium sequestration involved in muscular excitation/contraction. Functionally, this magnesium-dependent enzyme catalyzes the hydrolysis of ATP coupled with the transport of calcium. Transports calcium ions from the cytosol into the sarcoplasmic/endoplasmic reticulum lumen. Contributes to calcium sequestration involved in muscular excitation/contraction. The chain is Sarcoplasmic/endoplasmic reticulum calcium ATPase 3 (Atp2a3) from Rattus norvegicus (Rat).